The chain runs to 1135 residues: METQKDEAAQAKGAAASGSTREQTAEKGAKNKAAEATEGPTSEPSSSGPGRLKKTAMKLFGGKKGICTLPSFFGGGRSKGSGKGSSKKGLSKSKTHDGLSEAAHGPEDVVSEGTGFSLPLPELPCQFPSSQSAHGALETGSRCKTSVAGATEKAVAEKFPSMPKPKKGLKGFFSSIRRHRKSKVTGAEQSEPGAKGPERVRARPHEHVSSAPQVPCFEETFQAPRKENANPQDAPGPKVSPTPEPSPPATEKMACKDPEKPMEACASAHVQPKPAPEASSLEEPHSPETGEKVVAGEVNPPNGPVGDPLSLLFGDVTSLKSFDSLTGCGDIIAEQDMDSMTDSMASGGQRANRDGTKRSSCLVTYQGGGEEMALPDDDDEEEEEEEEVELEEEEEEVKEEEEDDDLEYLWETAQMYPRPNMNLGYHPTTSPGHHGYMLLDPVRSYPGLAPGELLTPQSDQQESAPNSDEGYYDSTTPGFEDDSGEALGLVRRDCLPRDSYSGDALYEFYEPDDSLENSPPGDDCLYDLHGRSSEMFDPFLNFEPFLSSRPPGAMETEEERLVTIQKQLLYWELRREQLEAQEARAREAHAREAHAREAYTREAYGREAYAREAHTWEAHGREARTREAQAREVRCRETQVRETQARQEKPVLEYQMRPLGPSVMGLAAGVSGTSQISHRGITSAFPTTASSEPDWRDFRPLEKRYEGTCSKKDQSTCLMQLFQSDAMFEPDMQEANFGGSPRRAYPTYSPPEDPEEEEVEKEGNATVSFSQALVEFTSNGNLFSSMSCSSDSDSSFTQNLPELPPMVTFDIADVERDGEGKCEENPEFHNDEDLAASLEAFELGYYHKHAFNNYHSRFYQGLPWGVSSLPRYLGLPGLHPRPPPAAMALNRRSRSLDTAETLEMELSNSHLVQGYLESDELQAQQEDSDEEDEEEEEGEWSRDSPLSLYTEPPGAYDWPAWAPCPLPVGPGPAWISPNQLDRPSSQSPYRQATCCIPPMTMSISLSVPESRAPGESGPQLARPSHLHLPMGPCYNLQPQASQSMRARPRDVLLPVDEPSCSSSSGGFSPSPLPQAKPVGITHGIPQLPRVRPEHPQPQPTHYGPSSLDLSKERAEQGASLATSYSSTAMNGNLAK.

Residue M1 is modified to N-acetylmethionine. 7 disordered regions span residues 1-115, 156-308, 339-405, 447-484, 736-764, 921-948, and 1007-1135; these read METQ…EGTG, AEKF…VGDP, SMTD…EDDD, GLAPGELLTPQSDQQESAPNSDEGYYDSTTPGFEDDSG, NFGGSPRRAYPTYSPPEDPEEEEVEKEGN, LQAQQEDSDEEDEEEEEGEWSRDSPLSL, and VPES…NLAK. Residues 10–19 are compositionally biased toward low complexity; that stretch reads QAKGAAASGS. Residues 23–35 show a composition bias toward basic and acidic residues; that stretch reads QTAEKGAKNKAAE. Positions 36 to 50 are enriched in low complexity; the sequence is ATEGPTSEPSSSGPG. Gly residues predominate over residues 73–83; sequence FGGGRSKGSGK. Basic and acidic residues-rich tracts occupy residues 94–107 and 196–208; these read KTHDGLSEAAHGPE and GPERVRARPHEHV. Positions 238 to 248 are enriched in pro residues; it reads KVSPTPEPSPP. S246 carries the phosphoserine modification. Composition is skewed to basic and acidic residues over residues 253–262 and 282–291; these read MACKDPEKPM and EEPHSPETGE. Over residues 373–405 the composition is skewed to acidic residues; the sequence is ALPDDDDEEEEEEEEVELEEEEEEVKEEEEDDD. A compositionally biased stretch (polar residues) spans 455–466; sequence TPQSDQQESAPN. The segment covering 926-938 has biased composition (acidic residues); it reads EDSDEEDEEEEEG. The segment covering 1058 to 1069 has biased composition (low complexity); that stretch reads PSCSSSSGGFSP. Over residues 1119-1135 the composition is skewed to polar residues; sequence SLATSYSSTAMNGNLAK.

The protein belongs to the Amer family. As to quaternary structure, interacts with CTNNB1, AXIN1, LRP6, KEAP1, APC and BTRC. Interacts with SCF (SKP1-CUL1-F-box protein) E3 ubiquitin-protein ligase complexes containing BTRC and/or FBXW11. Identified in the beta-catenin destruction complex containing CTNNB1, APC, AXIN1 and AXIN2. Interacts with WT1. As to expression, detected in fetal and adult kidney, brain and spleen.

The protein resides in the cytoplasm. It is found in the cell membrane. The protein localises to the nucleus. Its function is as follows. Regulator of the canonical Wnt signaling pathway. Acts by specifically binding phosphatidylinositol 4,5-bisphosphate (PtdIns(4,5)P2), translocating to the cell membrane and interacting with key regulators of the canonical Wnt signaling pathway, such as components of the beta-catenin destruction complex. Acts both as a positive and negative regulator of the Wnt signaling pathway, depending on the context: acts as a positive regulator by promoting LRP6 phosphorylation. Also acts as a negative regulator by acting as a scaffold protein for the beta-catenin destruction complex and promoting stabilization of Axin at the cell membrane. Promotes CTNNB1 ubiquitination and degradation. Involved in kidney development. In Homo sapiens (Human), this protein is APC membrane recruitment protein 1 (AMER1).